The chain runs to 423 residues: Sulfate adenylyltransferase (423 aa).

Residues Gln-207 and Arg-209 each coordinate sulfate. ATP-binding positions include Gln-207–Asn-210 and Gly-301–His-304. Catalysis depends on residues Arg-209 and Asn-210. Ala-305 serves as a coordination point for sulfate.

It belongs to the sulfate adenylyltransferase family.

It is found in the mitosome. The catalysed reaction is sulfate + ATP + H(+) = adenosine 5'-phosphosulfate + diphosphate. The protein operates within sulfur metabolism; hydrogen sulfide biosynthesis; sulfite from sulfate: step 1/3. Functionally, catalyzes the first intracellular reaction of sulfate assimilation, forming adenosine-5'-phosphosulfate (APS) from inorganic sulfate and ATP. The chain is Sulfate adenylyltransferase from Entamoeba histolytica (strain ATCC 30459 / HM-1:IMSS / ABRM).